Consider the following 340-residue polypeptide: MNTDIANLKNQCIEELSRIKSLQELEDFQVKYLGKKGILKSKLKELSKLEPAIRAQVGKELNSLREYLEESIAIQRKRFLEEEKQKRIQSERIDVTIPGKRVEIGAIHILSQVQNEIAEIFLNMGYEIAEGPEVELDYYNFEALNIPADHPARDTQDTFYISEDVLLRTHTSPVQIRVMKSKKPPIKIISPGRVYRSDEVDSTHSPIFHQIEGLFVDKGVTMADLKGTLEVFAKRFFGEQTKVRFRPHHFPFTEPSAEVDISCIFCGGKGCRTCKGEGWIEILGAGMVHRKVLLNCGIDPDIYTGFAFGMGVERIALLRYEIEDIRLFYENDLRFLKQFR.

Residue glutamate 254 coordinates Mg(2+).

It belongs to the class-II aminoacyl-tRNA synthetase family. Phe-tRNA synthetase alpha subunit type 1 subfamily. In terms of assembly, tetramer of two alpha and two beta subunits. Requires Mg(2+) as cofactor.

The protein localises to the cytoplasm. The catalysed reaction is tRNA(Phe) + L-phenylalanine + ATP = L-phenylalanyl-tRNA(Phe) + AMP + diphosphate + H(+). The sequence is that of Phenylalanine--tRNA ligase alpha subunit from Caldicellulosiruptor bescii (strain ATCC BAA-1888 / DSM 6725 / KCTC 15123 / Z-1320) (Anaerocellum thermophilum).